A 298-amino-acid chain; its full sequence is Estradiol 17-beta-dehydrogenase 11 (298 aa).

The N-terminal stretch at 1–21 is a signal peptide; it reads MKYLLDLILLLPLLIVFCIES. An NADP(+)-binding site is contributed by 40–64; sequence LITGAGHGIGRLTAYEFAKLNTKLV. Serine 172 serves as a coordination point for substrate. The active-site Proton acceptor is tyrosine 185.

This sequence belongs to the short-chain dehydrogenases/reductases (SDR) family. 17-beta-HSD 3 subfamily.

The protein resides in the endoplasmic reticulum. It is found in the lipid droplet. The enzyme catalyses 17beta-estradiol + NAD(+) = estrone + NADH + H(+). It carries out the reaction 17beta-estradiol + NADP(+) = estrone + NADPH + H(+). Its function is as follows. Can convert androstan-3-alpha,17-beta-diol (3-alpha-diol) to androsterone in vitro, suggesting that it may participate in androgen metabolism during steroidogenesis. May act by metabolizing compounds that stimulate steroid synthesis and/or by generating metabolites that inhibit it. Has no activity toward DHEA (dehydroepiandrosterone), or A-dione (4-androste-3,17-dione), and only a slight activity toward testosterone to A-dione. In Rattus norvegicus (Rat), this protein is Estradiol 17-beta-dehydrogenase 11 (Hsd17b11).